The chain runs to 145 residues: D-aminoacyl-tRNA deacylase (145 aa).

The short motif at 137 to 138 (GP) is the Gly-cisPro motif, important for rejection of L-amino acids element.

The protein belongs to the DTD family. Homodimer.

The protein localises to the cytoplasm. The catalysed reaction is glycyl-tRNA(Ala) + H2O = tRNA(Ala) + glycine + H(+). It catalyses the reaction a D-aminoacyl-tRNA + H2O = a tRNA + a D-alpha-amino acid + H(+). Its function is as follows. An aminoacyl-tRNA editing enzyme that deacylates mischarged D-aminoacyl-tRNAs. Also deacylates mischarged glycyl-tRNA(Ala), protecting cells against glycine mischarging by AlaRS. Acts via tRNA-based rather than protein-based catalysis; rejects L-amino acids rather than detecting D-amino acids in the active site. By recycling D-aminoacyl-tRNA to D-amino acids and free tRNA molecules, this enzyme counteracts the toxicity associated with the formation of D-aminoacyl-tRNA entities in vivo and helps enforce protein L-homochirality. This is D-aminoacyl-tRNA deacylase from Francisella tularensis subsp. holarctica (strain FTNF002-00 / FTA).